The sequence spans 4473 residues: Plectin (4473 aa).

Calponin-homology (CH) domains are found at residues 1 to 74 (DGHN…LHFQ) and 87 to 192 (MTAK…DAMP). Residues 1–192 (DGHNLISLLE…YVSSLYDAMP (192 aa)) are actin-binding. The interval 1–1259 (DGHNLISLLE…SELTTLTSQY (1259 aa)) is globular 1. The Spectrin 1 repeat unit spans residues 449-508 (RYLQDLLAWVEENQRRIDSAEWGVDLPSVEAQLGSHRGMHQSIEEFRAKIERARNDESQL). Ser509 carries the post-translational modification Phosphoserine. 2 Spectrin repeats span residues 529–613 (KLLN…REDH) and 626–719 (LQTQ…AIVQ). A Phosphothreonine modification is found at Thr604. The SH3 domain occupies 730 to 787 (RGHVPLMAVCDYKQVEVTVHKGDQCQLVGPAQPSHWKVLRGPSSEAAVPSVCFLVPPP). The residue at position 836 (Ser836) is a Phosphoserine. A Spectrin 4 repeat occupies 1104 to 1204 (RERVNQLLER…QKFAKQYINA (101 aa)). Ser1224 is subject to Phosphoserine. A coiled-coil region spans residues 1258 to 2548 (QYIKFISETL…EEIAATQAAA (1291 aa)). Residues 1260 to 2544 (IKFISETLRR…LAHSEEIAAT (1285 aa)) are central fibrous rod domain. Disordered regions lie at residues 1274–1293 (ERLA…EGEA) and 1407–1434 (RAEE…DESQ). Position 1510 is a phosphoserine (Ser1510). Lys1514 is modified (N6-acetyllysine). Disordered regions lie at residues 1529-1550 (VTQL…ERAR), 1582-1616 (SLAQ…RELA), 1881-1929 (AEDT…AARQ), 1950-1971 (LRER…AAQK), and 2003-2098 (ERLR…KHKK). Basic and acidic residues-rich tracts occupy residues 1587 to 1616 (DAEK…RELA), 1881 to 1897 (AEDT…EAAR), and 1905 to 1917 (EEQR…ERVQ). A compositionally biased stretch (low complexity) spans 1959 to 1968 (ARQLQLAQEA). Over residues 2003–2047 (ERLRGEAEAARRAAEEAEEAREQAEREAAQSRKQVEEAERLKQSA) the composition is skewed to basic and acidic residues. The span at 2048 to 2061 (EEQAQARAQAQAAA) shows a compositional bias: low complexity. Basic and acidic residues predominate over residues 2062 to 2077 (EKLRKEAEQEAARRAQ). Position 2420 is a phosphoserine (Ser2420). Lys2425 carries the N6-acetyllysine modification. The segment at 2457–2476 (REEQQRQQRQMEQEKQELVA) is disordered. Residues 2545 to 4473 (QAAAAKALPN…SLGGPESAVA (1929 aa)) are globular 2. Phosphoserine occurs at positions 2563 and 2591. Plectin repeat units follow at residues 2615 to 2652 (RQYL…PGTA), 2653 to 2690 (LILL…PELH), 2691 to 2728 (HKLL…RDHA), 2729 to 2766 (IRLL…EEMS), and 2770 to 2804 (ADPG…PETG). The residue at position 2675 (Thr2675) is a Phosphothreonine. Tyr2822 carries the post-translational modification Phosphotyrosine. Residues Lys2842 and Lys2880 each carry the N6-acetyllysine modification. 5 Plectin repeats span residues 2905 to 2942 (ALVP…ADSV), 2943 to 2980 (RRAL…PDVA), 2981 to 3018 (VALL…PELH), 3019 to 3056 (EKLL…REQG), and 3057 to 3094 (LRLL…KETN). Position 3151 is a phosphotyrosine (Tyr3151). An N6-acetyllysine modification is found at Lys3209. Plectin repeat units lie at residues 3274 to 3311 (RTLL…PSTA), 3312 to 3349 (TLLL…PELH), 3350 to 3387 (EKLL…REHA), 3388 to 3425 (IRLL…EEMS), and 3429 to 3463 (ADPS…PETG). Thr3574 carries the post-translational modification Phosphothreonine. A Phosphotyrosine modification is found at Tyr3579. Plectin repeat units lie at residues 3609–3646 (WRYL…AEVA), 3647–3684 (RLLL…PELH), 3685–3722 (DRLL…AEEA), 3723–3760 (LRLL…KDTH), 3764–3797 (SEPS…DGSG), and 3800–3834 (LLPL…EATA). Phosphothreonine is present on Thr3819. Position 3843 is a phosphoserine (Ser3843). 6 Plectin repeats span residues 3852 to 3889 (QKFL…PGTA), 3890 to 3927 (FELL…PEFK), 3928 to 3965 (DRLL…KDHG), 3966 to 4003 (IRLL…EEMN), 4007 to 4041 (TDPS…PQTG), and 4043 to 4094 (RLLP…HQTY). Positions 4039-4089 (QTGLRLLPLKEKKRERKTSSKSSVRKRRVVIVDPETSKEMSVYEAYRKGLI) are binding to intermediate filaments. Phosphoserine is present on residues Ser4171, Ser4173, Ser4174, Ser4175, Ser4178, Ser4179, Ser4180, and Ser4181. At Tyr4182 the chain carries Phosphotyrosine. A phosphoserine mark is found at Ser4185, Ser4189, and Ser4195. 5 Plectin repeats span residues 4197 to 4234 (SDPT…NITG), 4235 to 4272 (QRLL…KIMV), 4273 to 4310 (DRIN…YEAG), 4311 to 4348 (QRFL…ARTA), and 4349 to 4386 (QKLR…EGTG). Thr4200 carries the phosphothreonine modification. Residue Thr4328 is modified to Phosphothreonine; by CDK1. Ser4396 and Ser4402 each carry phosphoserine. Over residues 4400–4460 (YYSPYSVSGS…SGYGRRYASG (61 aa)) the composition is skewed to low complexity. The interval 4400–4473 (YYSPYSVSGS…SLGGPESAVA (74 aa)) is disordered. Tyr4404 is subject to Phosphotyrosine. 3 positions are modified to phosphoserine: Ser4405, Ser4407, and Ser4411. Thr4412 bears the Phosphothreonine mark. The interval 4414-4429 (GSRTGSRTGSRAGSRR) is 4 X 4 AA tandem repeats of G-S-R-X. Ser4415 is modified (phosphoserine). Residues Arg4416 and Arg4429 each carry the omega-N-methylarginine modification. Ser4431 and Ser4464 each carry phosphoserine.

This sequence belongs to the plakin or cytolinker family. In terms of assembly, homodimer or homotetramer. Interacts (via actin-binding domain) with SYNE3. Interacts (via calponin-homology (CH) 1 domain) with VIM (via rod region). Interacts (via N-terminus) with DST isoform 2 (via N-terminus). Interacts with FER. Interacts with TOR1A. Interacts with ANK3. Identified in complexes that contain VIM, EZR, AHNAK, BFSP1, BFSP2, ANK2, PLEC, PRX and spectrin. Post-translationally, phosphorylated by CDK1; regulates dissociation from intermediate filaments during mitosis.

The protein localises to the cytoplasm. It localises to the cytoskeleton. The protein resides in the cell junction. Its subcellular location is the hemidesmosome. It is found in the cell projection. The protein localises to the podosome. In terms of biological role, interlinks intermediate filaments with microtubules and microfilaments and anchors intermediate filaments to desmosomes or hemidesmosomes. May be involved not only in the cross-linking and stabilization of cytoskeletal intermediate filaments network, but also in the regulation of their dynamics. This is Plectin (PLEC) from Cricetulus griseus (Chinese hamster).